The chain runs to 115 residues: Aspartate 1-decarboxylase (115 aa).

Ser25 acts as the Schiff-base intermediate with substrate; via pyruvic acid in catalysis. Residue Ser25 is modified to Pyruvic acid (Ser). Thr57 lines the substrate pocket. Residue Tyr58 is the Proton donor of the active site. 71–73 (GAA) is a binding site for substrate.

The protein belongs to the PanD family. In terms of assembly, heterooctamer of four alpha and four beta subunits. Pyruvate serves as cofactor. Post-translationally, is synthesized initially as an inactive proenzyme, which is activated by self-cleavage at a specific serine bond to produce a beta-subunit with a hydroxyl group at its C-terminus and an alpha-subunit with a pyruvoyl group at its N-terminus.

It is found in the cytoplasm. It carries out the reaction L-aspartate + H(+) = beta-alanine + CO2. Its pathway is cofactor biosynthesis; (R)-pantothenate biosynthesis; beta-alanine from L-aspartate: step 1/1. Catalyzes the pyruvoyl-dependent decarboxylation of aspartate to produce beta-alanine. The protein is Aspartate 1-decarboxylase of Campylobacter curvus (strain 525.92).